Consider the following 309-residue polypeptide: Olfactory receptor 5AC2 (309 aa).

Topologically, residues 1 to 27 (MDISEGNKTLVTEFVLTGLTDRPWLHV) are extracellular. N-linked (GlcNAc...) asparagine glycosylation is present at Asn-7. The chain crosses the membrane as a helical span at residues 28–48 (LFFVVFLVVYLITMVGNLGLI). At 49–56 (VLIWNDPH) the chain is on the cytoplasmic side. The chain crosses the membrane as a helical span at residues 57-77 (LHMPMYLFLGGLAFSDACTST). Topologically, residues 78–101 (SITPRMLVNFLDKTAMISLAECIT) are extracellular. Cys-99 and Cys-191 are disulfide-bonded. The helical transmembrane segment at 102 to 122 (QFYFFASSATTECFLLVMMAY) threads the bilayer. Topologically, residues 123-135 (DRYVAICNPLLYP) are cytoplasmic. Residues 136–156 (VMMSNKLSAQLLSISYVIGFL) traverse the membrane as a helical segment. Residues 157–198 (HPLVHVSLLLRLTFCRFNIIHYFYCEILQLFKISCNGPSINA) are Extracellular-facing. Residues 199–219 (LMIFIFGAFIQIPTLMTIIIS) traverse the membrane as a helical segment. The Cytoplasmic portion of the chain corresponds to 220–239 (YTRVLFDILKKKSEKGRSKA). The chain crosses the membrane as a helical span at residues 240–260 (FSTCGAHLLSVSLYYGTLIFM). At 261–273 (YVRPASGLAEDQD) the chain is on the extracellular side. A helical membrane pass occupies residues 274-294 (KVYSLFYTIIIPLLNPFIYSL). Residues 295–309 (RNKKVMHALRRVIRK) are Cytoplasmic-facing.

Belongs to the G-protein coupled receptor 1 family.

It is found in the cell membrane. Odorant receptor. The polypeptide is Olfactory receptor 5AC2 (OR5AC2) (Homo sapiens (Human)).